Reading from the N-terminus, the 581-residue chain is UvrABC system protein C (581 aa).

A GIY-YIG domain is found at 15–94 (REPGVYLFEQ…IKRHRPPYNV (80 aa)). Positions 202-237 (GVLADPLRREMEAAAQNQEFERAANLRDKLGAVEAL) constitute a UVR domain.

The protein belongs to the UvrC family. Interacts with UvrB in an incision complex.

It is found in the cytoplasm. Functionally, the UvrABC repair system catalyzes the recognition and processing of DNA lesions. UvrC both incises the 5' and 3' sides of the lesion. The N-terminal half is responsible for the 3' incision and the C-terminal half is responsible for the 5' incision. The chain is UvrABC system protein C from Haloarcula marismortui (strain ATCC 43049 / DSM 3752 / JCM 8966 / VKM B-1809) (Halobacterium marismortui).